The chain runs to 4080 residues: MAPSQAPREPIAIVGSGCRFPGESSSPSKLWELLQAPRDVQTEIPPTRFNPHGFYHPDNLHHGTSNVRHSYLLTEDHRHFDAQFFGIKPAEAHCIDPQQRLLMETVYESLESAGLRLEDLRGSETAVYVGLMCGDYADIVLRDPESFPMYLSTGTARSIMSNRISYFFDWHGPSMTIDTACSSSLVAVHEAVQTLRLGRSRVAVAAGSNLCLSPEPYIAESKLQMLSPTGRSRMWDIQADGYARGDGVAAVVLKTLSAALADGDHIECLIRETSVNQDGRTRGITMPSSEAQTRLIQDTYARAGLDPMKPQERCQYFEAHGTGTPTGDPLEAAAIRQAFFPGDNNQDRGCLFVGSIKTVVGHTEGTAGLAGVLKASLALRNGIIPPNLLFNQLNPKIKPFYTNLEIATAAKPWPVLPAGVPRRASVNSFGFGGTNAHAIIEAYEPALTAPSKSTEPDIAFIPFVFSAASESALRRMLELYAQHLSKNPTINARDLGWTLQARRSRFPFSIAVPGATTDQLRSNLETRLNSTDARQPLKIVKQESRPENPRILGVFTGQGAQWATMGRALYQSPKVRQIIQELDASLQALPIGERPSWTLASELTADASVSRIKAAEISQPMCTAVQVVLVQLLQSAGVVFDAVVGHSSGEIAAAYAAGFLSGTDAIRIAYYRGLCARLAQGAHGEKGAMMAVGTGVEDALELCAEPEFRGRMSVAAVNSSASVTLSGDADAITQAKEILDEEKKFARVLVVDKAYHSHHMQACSGRYLSCLAKARIAVSAPTDTKCVWYSTVRQGPVTEADLADLTGPYWNDNMVSPVLFAQAVETALAARGPFNMAVEVGPHPALRGPAQQTVQDVLETSLPYTPTLQRGMNDVEAMAECLGLLWQGLAPGFVDLSSYDAFLSQGAVSRVIKDLPRYSWDHDRVFWYESRVSRATRQRIAASHPILGTRCPDGVEQEFRWRNFLSLKELPWLTGHRIQGQIIFPGAGYISAAVDSARAMSSNESIQLVELQELLIRQAIVFEDENASVEILVSITDVTHHSKDMVRAQFSFYSAVGKESTQMTLNASGRLVITYGPVRKDALPVQRPSLVDMVDVPSERFYNALDPLGYSYTGRFRALKSMQRKLGIATGLVTRQEAADLSSVTLDPAMLDAAIQAVLLAKSFPGDGELWCSQVPKVIHRIAVNPTLCDPSGNGVESTFPLDAVLTMMKASDTQGDVDVYSADGQYTMIRMEGIHAVPLEATNADRDRPFFSGVVWGPAAPDSQTVNFDATATPEEYELAYVLERVATFYLRKIHLAFPMDHSARHEGPYVGLLNYATYVTQQVASGYHRYTQPHWARDTVAVIKSESQRFPNNIDLAVMHIIGEHMVDVISTRATILEHLTKDNLLSRYYEQAMGIGHFSDYLASVVEQIVHRYPQMKVLEIGAGTGMATKKVIQRVGHSFGSYTFTDISSGFFENAREIFASHQDQMVYKVLDAEKDPVAQGFGEQSYDLIVASFVLHATSHLETTLHNLRRLLKPGGYVVMLEVTNLEQSRLGYIFGSLPGWWLGANDGRILSPCVPTEEWDRLLKLTGFSGVDTFTSDADALPYPASAIVSQAVDETVDFLRNPLGTPSDFVNRATPVVLIGGASSSVRVIRDVVKRHLDTRFDQVQVVDRLSDFVAISPAVSNGLLTLNLSDLEEPVFQNMTADSLAALKLLYERSNYVLWVTEDARAGNPHQNQSLGFGRSMMVEMPHVQSQFLDLDRITETSSVASRIVDAALRFVGVNMPDRGGDVASAGLLWSTEPEIAVIGGRELLPRIKLNRSQNLRYNASRRAIAEDVDMDQKSVQLVRNGNAYVLEQGSTSGFGNQTPGYTRIRVDVSSLKSLHLGRGNALYLVAGTVLATGEKVIGFADKNSSIVDIPPSWMSHRPDISMAALILSIIARLFSRAILSSISPGGVLVVAEPDELLAPVLEWQASQQKIRVVFVTTQEDAPERPNWVVLHSQVHVRSLPKLAPTEPVTILDLSTGEEPSALALKLRNSLHPASAFERLTYWFSDHARRGEIHIPAEAMLTMYRPPMSPPASDSVIASHSFPVTDVSQIPAARCPLAVVDWQSTSHVPALIRPVDHYPMLKSNKTYWLVGLTGSLGLSLCAWMIHQGAQNVVLTSRNPKIDQIILQELRSLGARVEVYAGDVTNQESLRGVYDRICQTLPPVAGVGQGAMVLIDTMIKDMEIDAMQSVLQPKVKGSINLDELFSAERPLDFFIFFSSATCVTGNIGQSNYAAANMFMTGLAANRNRRGLAGSVMNIGAIMGVGYVTRETSEALQRNLLKSGHVWMSEQDFHTIFAEAILAGTPGSDANVEITCGLRITNASEEQRPLWSFNPRFQHLVVMEEQVEETYEQDKKGMSLKLQLREARTTDEIYEVIKECFIVKLQIMLGLDDAATNSITSKAADDLGIDSLNTVEIRSWFLKEMKVDIPVLRILGGATIGEIIKFVLEKLPSDMTPSLGLSPPTGAASKATSQPNPKPKVVVERRNVPRLEKKIVHSAGSRTSSSVTGTSKSVSPARSMDTASSQTSEAASPSIHTEEITKPLKPLAPLLKADVVSSNLGKVITPVEQTAALSVRKEPLSFGQSRFWFLKLYLEDQTTFNITCLLRMTGPLSVDSLSRAVTAVGQRHEALRTCFTVEDGQSPVQTILPESTLKLERQEYRTMADVNTATKKLTQHVYEMESGRLMRVILLSSAPNSSVHYVLVGYHHINMDGVSLEVFLHDLEKAYRGQPLSSDLLQYPDYAAKQRQERNQGAWQDDLTFWKNEMVGSNLEIPLLPLASVAIRKPLTQYRHHRVEQRLDARLGAQIRQLCQSIKATPSHFYLATFTTLLARLTRTREIWVGMADANRIQAETADSIGNYLNLLALRMQYDPDQPFVASVQAARKKSYGALAHSRIPFDVLLSELQVPRSSTHSPLFQVFMDYRHDVREKRMFGDCQLEGVEYEMGRTAYDIALDVVDTADDGPLIIMGLQESLYSPDTAQMLLNSFLEMVRAFAQDSKQPGGHVSLFSASDLEKALALGNGSVVASQWPATLSHRIDDMAKQYPQKLALNDGDNLRLTFQQMSQRADSIASALLSANVSRQQRVAVFQHPSSDCICSILAILRIGATYVPLDLRLELARLGSIVQDCEPTVFLVDSHTQSQAPDLMLTRPAMTINIADLPRIAPFPVMNRAAAEDEAVILYTSGSTGNPKGVPLTHENLRVNIEGNQAEFQFGPDDCLLQQIAFSFDFSVWQIFMALANGASLFIAPSTHRGDPVALMDLVVREDITITGATPSEYRSWFQHGDLARLKTSQWKTAVSAGEAMTTNMIRDFQALNKSDLRLVNGYGPTEASMSSNKLVVPYLTNKDHPEEWMEKGAVVAGYTAPNYSIYIVDEAMNLLPIGLPGQILIGGPGIASGYLNNKELSCIRFINDKYASPEQRACGWRWAHLTGDRGRIGADGRLRIEGRIEGDTQVKLRGYRIDLQDVEAAMLKASPGAFKDLVVSLHQSTQALVAHVVFSQHYPAHKHSQALEIKSLELPRYMWPARTVSIDQMPVTVHGKLDRKALQTMDLPAIEPMKQTSTAHLNEAQAQMVQLWEEVISKDILAAHHIVAESDFFAVGGTSMLLVDLQRQIKSWFKMEIALAELFSANTLEKMALLIKPQEDIATPAAVDAAPPSSPSPLALTASLPPAPTTINWSEEVQLPRVLREQTSSGTTVSVPEKTSGLRLVLTGATGFIGQALLQQLTANPAISTVHCIAVRDPSAIPAHEKILVHAGDLTHAALGLAPAEAQAIFREVDAVIHNGADVSFMKSYHSLRRTNVESTIALIQNSLSRQIPFHYISSSGIANLAGTTTFAEVSAASFIPPTDGSQGYLATKWVSERLLEEAHREFGLPVYIHRPSSVTGSNAPPLDLMDNLMTYARRLKAVPMPERSSWKGYLDFVPVEQVVRDVTGDVLSAAGTVPSARASKVHYIHHLGRQVSLTGLHRYLERETGAVYRVLKMGEWLEEATQVGMDALLRTYLESMDKEDVKVVFPRLVAGKRHASTVGVAKGVKIGESWLEKGKTLLFSW.

The Ketosynthase family 3 (KS3) domain occupies 8–442 (REPIAIVGSG…GTNAHAIIEA (435 aa)). Active-site for beta-ketoacyl synthase activity residues include cysteine 181, histidine 320, and histidine 362. Residues 554–878 (VFTGQGAQWA…QRGMNDVEAM (325 aa)) form a malonyl-CoA:ACP transacylase (MAT) domain region. The segment at 944-1078 (HPILGTRCPD…GRLVITYGPV (135 aa)) is N-terminal hotdog fold. Positions 944–1246 (HPILGTRCPD…AVPLEATNAD (303 aa)) constitute a PKS/mFAS DH domain. Positions 945-1243 (PILGTRCPDG…GIHAVPLEAT (299 aa)) are dehydratase (DH) domain. The active-site Proton acceptor; for dehydratase activity is the histidine 976. The interval 1093–1246 (MVDVPSERFY…AVPLEATNAD (154 aa)) is C-terminal hotdog fold. Catalysis depends on aspartate 1152, which acts as the Proton donor; for dehydratase activity. Residues 1400-1585 (HFSDYLASVV…GVDTFTSDAD (186 aa)) are methyltransferase (MT) domain. Residues 2118-2292 (TYWLVGLTGS…AGSVMNIGAI (175 aa)) are ketoreductase (KR)domain. The peptidyl carrier protein stretch occupies residues 2399-2478 (TTDEIYEVIK…TIGEIIKFVL (80 aa)). One can recognise a Carrier 1 domain in the interval 2405 to 2481 (EVIKECFIVK…EIIKFVLEKL (77 aa)). Serine 2441 is subject to O-(pantetheine 4'-phosphoryl)serine. Residues 2488-2569 (SLGLSPPTGA…AASPSIHTEE (82 aa)) are disordered. The segment covering 2511-2525 (VVVERRNVPRLEKKI) has biased composition (basic and acidic residues). Residues 2528–2545 (SAGSRTSSSVTGTSKSVS) show a composition bias toward low complexity. Positions 2551 to 2565 (DTASSQTSEAASPSI) are enriched in polar residues. The condensation stretch occupies residues 2607-3036 (KEPLSFGQSR…DSKQPGGHVS (430 aa)). The adenylation stretch occupies residues 3069–3478 (DMAKQYPQKL…DGRLRIEGRI (410 aa)). A Carrier 2 domain is found at 3593-3673 (AHLNEAQAQM…KMALLIKPQE (81 aa)). Residues 3598–3670 (AQAQMVQLWE…TLEKMALLIK (73 aa)) form a thiolation region. Serine 3633 bears the O-(pantetheine 4'-phosphoryl)serine mark. Residues 3740-3959 (LTGATGFIGQ…DFVPVEQVVR (220 aa)) are reductase (RED) domain.

The protein in the C-terminal section; belongs to the NRP synthetase family.

The protein operates within secondary metabolite biosynthesis. Hybrid PKS-NRPS synthetase; part of the gene cluster that mediates the biosynthesis of oxaleimides, cytotoxic compounds containing an unusual disubstituted succinimide moiety. The first step of the pathway is provided by the HR-PKS poxF that serves in a new mode of collaborative biosynthesis with the PKS-NRPS poxE, by providing the olefin containing amino acid substrate via the synthesis of an ACP-bound dec-4-enoate. The cytochrome P450 monooxygenase poxM-catalyzed oxidation at the alpha-position creates the enzyme-bound 2-hydroxydec-4-enoyl-ACP thioester, which may be prone to spontaneous hydrolysis to yield 2-hydroxydec-4-enoic acid due to increased electrophilicity of the carbonyl. 2-hydroxydec-4-enoic acid can then be further oxidized by poxM to yield the alpha-ketoacid 2-oxodec-4-enoicacid, which is reductively aminated by the aminotransferase poxL to yield (S,E)-2-aminodec-4-enoic acid. The Hybrid PKS-NRPS synthetase poxE then performs condensation between the octaketide product of its PKS modules and the amino group of (S,E)-2-aminodec-4-enoic acid which is activated and incorporated by the adenylation domain. The resulting aminoacyl product can be cyclized by the Diels-Alderase PoxQ and reductively released by the reductive (R) domain of poxE to yield an aldehyde intermediate. The released aldehyde is then substrate for a Knoevenagel condensation by the hydrolyase poxO followed by an oxidation at the 5-position of the pyrrolidone ring. The presence of the olefin from the amino acid building block allows for migration of the substituted allyl group to occur. This allylic transposition reaction takes place in a conjugate addition, semipinacol-like fashion to yield a succinimide intermediate. Iterative two-electron oxidations of the C7 methyl of the succinimide intermediate to the carboxylic acid can be catalyzed by one of two remaining cytochrome P450 monooxygenasess poxC or poxD to yield oxaleimide A. Subsequent oxidation yields the maleimide scaffold oxaleimide I. Both oxaleimide A and oxaleimide I can undergo oxidative modifications in the decalin ring to yield the series of products oxaleimides B to H. The protein is Hybrid PKS-NRPS synthetase poxE of Penicillium oxalicum (strain 114-2 / CGMCC 5302) (Penicillium decumbens).